Here is a 605-residue protein sequence, read N- to C-terminus: Cell wall integrity and stress response component 4 (605 aa).

The signal sequence occupies residues 1–26; it reads MQTSMVSAKVSIWLVCSVICSSLVRA. The WSC domain maps to 27–110; the sequence is TQSVCSSQNT…DKDLFGYIYL (84 aa). Positions 151–305 are disordered; it reads SPTLTSTSTT…PSSTTVTYTS (155 aa). N-linked (GlcNAc...) asparagine glycosylation is found at Asn340, Asn386, Asn389, and Asn398. Residues 381 to 399 show a composition bias toward low complexity; that stretch reads RITNNNNSNTTNSNTPTNK. Residues 381–404 form a disordered region; sequence RITNNNNSNTTNSNTPTNKSTEKK. The chain crosses the membrane as a helical span at residues 415-435; the sequence is ATFVVVGVVCLVIICILIYLI. Asn479 carries N-linked (GlcNAc...) asparagine glycosylation. The interval 494–521 is disordered; sequence GQIMSESPSPRQSTYSLTAGSPPNDPST. The span at 497–521 shows a compositional bias: polar residues; the sequence is MSESPSPRQSTYSLTAGSPPNDPST. N-linked (GlcNAc...) asparagine glycans are attached at residues Asn553 and Asn583.

It is found in the membrane. This Saccharomyces cerevisiae (strain ATCC 204508 / S288c) (Baker's yeast) protein is Cell wall integrity and stress response component 4 (WSC4).